The primary structure comprises 856 residues: DNA mismatch repair protein MutS (856 aa).

607 to 614 (GPNMSGKS) contacts ATP.

Belongs to the DNA mismatch repair MutS family.

Its function is as follows. This protein is involved in the repair of mismatches in DNA. It is possible that it carries out the mismatch recognition step. This protein has a weak ATPase activity. The chain is DNA mismatch repair protein MutS from Lactobacillus delbrueckii subsp. bulgaricus (strain ATCC BAA-365 / Lb-18).